Consider the following 96-residue polypeptide: Co-chaperonin GroES (96 aa).

The protein belongs to the GroES chaperonin family. As to quaternary structure, heptamer of 7 subunits arranged in a ring. Interacts with the chaperonin GroEL.

It is found in the cytoplasm. Its function is as follows. Together with the chaperonin GroEL, plays an essential role in assisting protein folding. The GroEL-GroES system forms a nano-cage that allows encapsulation of the non-native substrate proteins and provides a physical environment optimized to promote and accelerate protein folding. GroES binds to the apical surface of the GroEL ring, thereby capping the opening of the GroEL channel. The protein is Co-chaperonin GroES of Nitrosospira multiformis (strain ATCC 25196 / NCIMB 11849 / C 71).